Here is a 279-residue protein sequence, read N- to C-terminus: Tryptophan synthase alpha chain (279 aa).

Active-site proton acceptor residues include Glu-50 and Asp-61.

The protein belongs to the TrpA family. In terms of assembly, tetramer of two alpha and two beta chains.

The catalysed reaction is (1S,2R)-1-C-(indol-3-yl)glycerol 3-phosphate + L-serine = D-glyceraldehyde 3-phosphate + L-tryptophan + H2O. Its pathway is amino-acid biosynthesis; L-tryptophan biosynthesis; L-tryptophan from chorismate: step 5/5. In terms of biological role, the alpha subunit is responsible for the aldol cleavage of indoleglycerol phosphate to indole and glyceraldehyde 3-phosphate. The chain is Tryptophan synthase alpha chain from Brucella suis (strain ATCC 23445 / NCTC 10510).